Here is a 282-residue protein sequence, read N- to C-terminus: 4-diphosphocytidyl-2-C-methyl-D-erythritol kinase (282 aa).

Lysine 9 is an active-site residue. Residue 98–108 (PMGGGLGGGSS) participates in ATP binding. Residue aspartate 140 is part of the active site.

This sequence belongs to the GHMP kinase family. IspE subfamily. Homodimer.

The enzyme catalyses 4-CDP-2-C-methyl-D-erythritol + ATP = 4-CDP-2-C-methyl-D-erythritol 2-phosphate + ADP + H(+). The protein operates within isoprenoid biosynthesis; isopentenyl diphosphate biosynthesis via DXP pathway; isopentenyl diphosphate from 1-deoxy-D-xylulose 5-phosphate: step 3/6. Functionally, catalyzes the phosphorylation of the position 2 hydroxy group of 4-diphosphocytidyl-2C-methyl-D-erythritol. The protein is 4-diphosphocytidyl-2-C-methyl-D-erythritol kinase of Salmonella heidelberg (strain SL476).